We begin with the raw amino-acid sequence, 500 residues long: Glutamyl-tRNA(Gln) amidotransferase subunit A (500 aa).

Active-site charge relay system residues include K93 and S168. S192 functions as the Acyl-ester intermediate in the catalytic mechanism.

The protein belongs to the amidase family. GatA subfamily. In terms of assembly, heterotrimer of A, B and C subunits.

It carries out the reaction L-glutamyl-tRNA(Gln) + L-glutamine + ATP + H2O = L-glutaminyl-tRNA(Gln) + L-glutamate + ADP + phosphate + H(+). Allows the formation of correctly charged Gln-tRNA(Gln) through the transamidation of misacylated Glu-tRNA(Gln) in organisms which lack glutaminyl-tRNA synthetase. The reaction takes place in the presence of glutamine and ATP through an activated gamma-phospho-Glu-tRNA(Gln). The sequence is that of Glutamyl-tRNA(Gln) amidotransferase subunit A from Corynebacterium jeikeium (strain K411).